We begin with the raw amino-acid sequence, 208 residues long: Ubiquitin-conjugating enzyme E2 S (208 aa).

The region spanning 14-160 is the UBC core domain; the sequence is QTIRQVMKEL…ARMMTEIHAQ (147 aa). Residue C98 is the Glycyl thioester intermediate of the active site. Residues 161 to 196 are disordered; that stretch reads PAKCGAGASDAKDDDGPSTKKHAGVDKKLQDKKKEK. Positions 170-196 are enriched in basic and acidic residues; it reads DAKDDDGPSTKKHAGVDKKLQDKKKEK.

The protein belongs to the ubiquitin-conjugating enzyme family.

The enzyme catalyses S-ubiquitinyl-[E1 ubiquitin-activating enzyme]-L-cysteine + [E2 ubiquitin-conjugating enzyme]-L-cysteine = [E1 ubiquitin-activating enzyme]-L-cysteine + S-ubiquitinyl-[E2 ubiquitin-conjugating enzyme]-L-cysteine.. It functions in the pathway protein modification; protein ubiquitination. Functionally, catalyzes the covalent attachment of ubiquitin to other proteins. Acts as an essential factor of the anaphase promoting complex/cyclosome (APC/C), a cell cycle-regulated ubiquitin ligase that controls progression through mitosis. Acts by specifically elongating polyubiquitin chains initiated by the E2 enzyme vih/UbcH10 on APC/C substrates, enhancing the degradation of APC/C substrates by the proteasome and promoting mitotic exit. This chain is Ubiquitin-conjugating enzyme E2 S, found in Drosophila grimshawi (Hawaiian fruit fly).